We begin with the raw amino-acid sequence, 639 residues long: CREB3 regulatory factor (639 aa).

Residues 302-422 are disordered; it reads PLPQEGPGSL…SVEDLKEVTS (121 aa). Residues 310–328 are compositionally biased toward low complexity; sequence SLAAGESSSLSASTSVSDS. Positions 339 to 351 are enriched in polar residues; that stretch reads LFVSDNLGEQPTK. The segment covering 355-370 has biased composition (acidic residues); sequence EEDEEDEEDVDDEDHD. Basic and acidic residues predominate over residues 371–380; sequence EGFGSEHELS. The span at 381–401 shows a compositional bias: acidic residues; that stretch reads ENEEEEEEEEDYEDDKDDDIS. The region spanning 521-584 is the bZIP domain; the sequence is TARPRSRKEK…VNRVQNPRDE (64 aa). The segment at 523 to 532 is basic motif; that stretch reads RPRSRKEKNK. Positions 533–540 are leucine-zipper; sequence LASRACRL.

It belongs to the bZIP family. CREBRF subfamily. In terms of assembly, interacts (via leucine-zipper domain) with CREB3 (via leucine-zipper domain); the interaction promotes CREB3 degradation. Probably degraded by the proteasome.

Its subcellular location is the nucleus. Its function is as follows. Acts as a negative regulator of the endoplasmic reticulum stress response or unfolded protein response (UPR). Represses the transcriptional activity of CREB3 during the UPR. Recruits CREB3 into nuclear foci. This is CREB3 regulatory factor (CREBRF) from Homo sapiens (Human).